Here is a 582-residue protein sequence, read N- to C-terminus: MTSNALKVFISDLHGELDVFDFLADRQFGILHLLIRQQFSPELNETLCAAIEASAIRLCRAANASQAQLDRTSAVSKEILFTALFLMVVQQKAEDESLTIAIRRWGWLSTVHRALSGDAQLSCTPFSQLVEMLAQNIRTLSAQDFFALVQAFAKALFKKLSPELNIVGDIYDRGQDAFAIMERLRGLPNVAIQWGNHDVVWMGAASGNLACITVAVRICLRYGTLDMLHRDYGINLSRLERFAAKAYGDDDCAQFTPKGDLNAEEKLRIARMHKAISIIQFKLEGKLIARRPEYTMADRLLLDKINIANSTVTVGDAVHPLLDSNFPTLDVEQPYRLSEDERKVAEDLKQQFLASAKLTQHMDILFHRGGMQKKTGDWLLYHACVPVDEQGEFQPFALAPETTRGQSLFNFCELEMRRGYLNRMVINDRNESDIAWFLWCGPHSPLFGKARMTTFERYFVADKQTHKEGKNEYYNLRSNPEFLARVATELKCSSDQVRIVNGHVPVKYQSGERPVQANGKLFSIDGGFSMPYRSATGLAGFVLLEALGQIVLYRVIPNDKRYALEVEYQQILKPKAASVPAA.

It belongs to the FBPase class 3 family. It depends on Mn(2+) as a cofactor.

The catalysed reaction is beta-D-fructose 1,6-bisphosphate + H2O = beta-D-fructose 6-phosphate + phosphate. It functions in the pathway carbohydrate biosynthesis; gluconeogenesis. The sequence is that of Fructose-1,6-bisphosphatase class 3 from Saccharophagus degradans (strain 2-40 / ATCC 43961 / DSM 17024).